We begin with the raw amino-acid sequence, 81 residues long: uncharacterized protein (81 aa).

This is an uncharacterized protein from Autographa californica nuclear polyhedrosis virus (AcMNPV).